A 246-amino-acid polypeptide reads, in one-letter code: UPF0736 protein Aflv_2136 (246 aa).

This sequence belongs to the UPF0736 family.

This is UPF0736 protein Aflv_2136 from Anoxybacillus flavithermus (strain DSM 21510 / WK1).